We begin with the raw amino-acid sequence, 291 residues long: Bis(5'-nucleosyl)-tetraphosphatase, symmetrical (291 aa).

It belongs to the Ap4A hydrolase family.

It catalyses the reaction P(1),P(4)-bis(5'-adenosyl) tetraphosphate + H2O = 2 ADP + 2 H(+). Its function is as follows. Hydrolyzes diadenosine 5',5'''-P1,P4-tetraphosphate to yield ADP. This is Bis(5'-nucleosyl)-tetraphosphatase, symmetrical from Coxiella burnetii (strain Dugway 5J108-111).